A 338-amino-acid polypeptide reads, in one-letter code: Ketol-acid reductoisomerase (NADP(+)) (338 aa).

Residues 1–181 form the KARI N-terminal Rossmann domain; that stretch reads MKVYYDKDCD…GGGRTGIIET (181 aa). NADP(+) contacts are provided by residues 24-27, Arg-47, Ser-50, Thr-52, and 82-85; these read YGSQ and DEFQ. The active site involves His-107. Residue Gly-133 participates in NADP(+) binding. The KARI C-terminal knotted domain maps to 182–327; that stretch reads TFKDETETDL…EQLRAMMPWI (146 aa). Mg(2+)-binding residues include Asp-190, Glu-194, Glu-226, and Glu-230. Ser-251 is a substrate binding site.

Belongs to the ketol-acid reductoisomerase family. Mg(2+) serves as cofactor.

It catalyses the reaction (2R)-2,3-dihydroxy-3-methylbutanoate + NADP(+) = (2S)-2-acetolactate + NADPH + H(+). It carries out the reaction (2R,3R)-2,3-dihydroxy-3-methylpentanoate + NADP(+) = (S)-2-ethyl-2-hydroxy-3-oxobutanoate + NADPH + H(+). It participates in amino-acid biosynthesis; L-isoleucine biosynthesis; L-isoleucine from 2-oxobutanoate: step 2/4. Its pathway is amino-acid biosynthesis; L-valine biosynthesis; L-valine from pyruvate: step 2/4. In terms of biological role, involved in the biosynthesis of branched-chain amino acids (BCAA). Catalyzes an alkyl-migration followed by a ketol-acid reduction of (S)-2-acetolactate (S2AL) to yield (R)-2,3-dihydroxy-isovalerate. In the isomerase reaction, S2AL is rearranged via a Mg-dependent methyl migration to produce 3-hydroxy-3-methyl-2-ketobutyrate (HMKB). In the reductase reaction, this 2-ketoacid undergoes a metal-dependent reduction by NADPH to yield (R)-2,3-dihydroxy-isovalerate. The sequence is that of Ketol-acid reductoisomerase (NADP(+)) from Ectopseudomonas mendocina (strain ymp) (Pseudomonas mendocina).